The primary structure comprises 316 residues: Beta-ketoacyl-[acyl-carrier-protein] synthase III 1 (316 aa).

Residues C112 and H243 contribute to the active site. An ACP-binding region spans residues 244-248 (QANYR). The active site involves N273.

Belongs to the thiolase-like superfamily. FabH family. As to quaternary structure, homodimer.

It is found in the cytoplasm. The enzyme catalyses malonyl-[ACP] + acetyl-CoA + H(+) = 3-oxobutanoyl-[ACP] + CO2 + CoA. It participates in lipid metabolism; fatty acid biosynthesis. Functionally, catalyzes the condensation reaction of fatty acid synthesis by the addition to an acyl acceptor of two carbons from malonyl-ACP. Catalyzes the first condensation reaction which initiates fatty acid synthesis and may therefore play a role in governing the total rate of fatty acid production. Possesses both acetoacetyl-ACP synthase and acetyl transacylase activities. Its substrate specificity determines the biosynthesis of branched-chain and/or straight-chain of fatty acids. This is Beta-ketoacyl-[acyl-carrier-protein] synthase III 1 from Vibrio vulnificus (strain YJ016).